The chain runs to 406 residues: Suppressor protein SRP40 (406 aa).

Positions 1 to 25 (MASKKIKVDEVPKLSVKEKEIEEKS) are enriched in basic and acidic residues. The tract at residues 1–335 (MASKKIKVDE…EIKEGQRKHF (335 aa)) is disordered. Positions 26–115 (SSSSSSSSSS…SSSSSSSSDE (90 aa)) are enriched in low complexity. The span at 125–148 (ETKKRARESDNEDAKETKKAKTEP) shows a compositional bias: basic and acidic residues. Position 133 is a phosphoserine (Ser-133). Composition is skewed to low complexity over residues 149 to 168 (ESSS…SESE), 176 to 186 (DSSSSSSSSSD), 194 to 233 (DSQS…SSSD), and 243 to 268 (DSDS…SSDS). Residues 283–297 (LETKEATADESKAEE) show a composition bias toward basic and acidic residues. Thr-289 is subject to Phosphothreonine. Position 293 is a phosphoserine (Ser-293). Residues 298–316 (TPASSNESTPSASSSSSAN) show a composition bias toward low complexity. The segment covering 325–335 (DEIKEGQRKHF) has biased composition (basic and acidic residues). The residue at position 394 (Ser-394) is a Phosphoserine.

Post-translationally, pyrophosphorylated by 5-diphosphoinositol pentakisphosphate (5-IP7). Serine pyrophosphorylation is achieved by Mg(2+)-dependent, but enzyme independent transfer of a beta-phosphate from a inositol pyrophosphate to a pre-phosphorylated serine residue.

In terms of biological role, not known; weak suppressor of a mutant of the subunit AC40 of DNA dependent RNA polymerase I and III. This Saccharomyces cerevisiae (strain ATCC 204508 / S288c) (Baker's yeast) protein is Suppressor protein SRP40 (SRP40).